A 269-amino-acid polypeptide reads, in one-letter code: Tryptophan synthase alpha chain (269 aa).

Catalysis depends on proton acceptor residues Glu49 and Asp60.

This sequence belongs to the TrpA family. Tetramer of two alpha and two beta chains.

It carries out the reaction (1S,2R)-1-C-(indol-3-yl)glycerol 3-phosphate + L-serine = D-glyceraldehyde 3-phosphate + L-tryptophan + H2O. It functions in the pathway amino-acid biosynthesis; L-tryptophan biosynthesis; L-tryptophan from chorismate: step 5/5. In terms of biological role, the alpha subunit is responsible for the aldol cleavage of indoleglycerol phosphate to indole and glyceraldehyde 3-phosphate. The chain is Tryptophan synthase alpha chain from Klebsiella aerogenes (Enterobacter aerogenes).